A 174-amino-acid chain; its full sequence is Nicotinamide-nucleotide adenylyltransferase (174 aa).

This sequence belongs to the archaeal NMN adenylyltransferase family.

The protein resides in the cytoplasm. It catalyses the reaction beta-nicotinamide D-ribonucleotide + ATP + H(+) = diphosphate + NAD(+). Its pathway is cofactor biosynthesis; NAD(+) biosynthesis; NAD(+) from nicotinamide D-ribonucleotide: step 1/1. The sequence is that of Nicotinamide-nucleotide adenylyltransferase from Archaeoglobus fulgidus (strain ATCC 49558 / DSM 4304 / JCM 9628 / NBRC 100126 / VC-16).